We begin with the raw amino-acid sequence, 346 residues long: Biotin synthase (346 aa).

Positions 38–256 (QQVQVSTLLS…IAVARIMMPT (219 aa)) constitute a Radical SAM core domain. [4Fe-4S] cluster-binding residues include Cys53, Cys57, and Cys60. Residues Cys97, Cys128, Cys188, and Arg260 each coordinate [2Fe-2S] cluster.

Belongs to the radical SAM superfamily. Biotin synthase family. As to quaternary structure, homodimer. [4Fe-4S] cluster serves as cofactor. It depends on [2Fe-2S] cluster as a cofactor.

It carries out the reaction (4R,5S)-dethiobiotin + (sulfur carrier)-SH + 2 reduced [2Fe-2S]-[ferredoxin] + 2 S-adenosyl-L-methionine = (sulfur carrier)-H + biotin + 2 5'-deoxyadenosine + 2 L-methionine + 2 oxidized [2Fe-2S]-[ferredoxin]. Its pathway is cofactor biosynthesis; biotin biosynthesis; biotin from 7,8-diaminononanoate: step 2/2. In terms of biological role, catalyzes the conversion of dethiobiotin (DTB) to biotin by the insertion of a sulfur atom into dethiobiotin via a radical-based mechanism. This is Biotin synthase from Salmonella agona (strain SL483).